A 260-amino-acid chain; its full sequence is Large ribosomal subunit protein uL4 (260 aa).

It belongs to the universal ribosomal protein uL4 family. In terms of assembly, part of the 50S ribosomal subunit.

Functionally, one of the primary rRNA binding proteins, this protein initially binds near the 5'-end of the 23S rRNA. It is important during the early stages of 50S assembly. It makes multiple contacts with different domains of the 23S rRNA in the assembled 50S subunit and ribosome. In terms of biological role, forms part of the polypeptide exit tunnel. In Methanopyrus kandleri (strain AV19 / DSM 6324 / JCM 9639 / NBRC 100938), this protein is Large ribosomal subunit protein uL4.